The following is a 245-amino-acid chain: MYRYKITIEYLGTHFAGWQRQAGVLSVQQILEEAIYKFSSEQVTLFGSGRTDAGVHAIGQVAHFDLSKYLEPYKIIKAINYFVRPYDVGVWNCELVSNNFHARFSAISRHYIYRIINRTYPSVIDFNRAWWISSPLDILAMQKAAAYLLGKHDFTSFRSSSCQSKSPIKTLTEINIIKEYEEIKLYISAPSFLHYMVRNIVGSLVLVGKNIWQAEQIKNVLDARDRKIAGPTAPAFGLYFIKAEY.

Aspartate 52 functions as the Nucleophile in the catalytic mechanism. Tyrosine 111 contacts substrate.

Belongs to the tRNA pseudouridine synthase TruA family. As to quaternary structure, homodimer.

The catalysed reaction is uridine(38/39/40) in tRNA = pseudouridine(38/39/40) in tRNA. Formation of pseudouridine at positions 38, 39 and 40 in the anticodon stem and loop of transfer RNAs. The chain is tRNA pseudouridine synthase A from Rickettsia prowazekii (strain Madrid E).